The primary structure comprises 227 residues: MGVSIRALHPWAVDAAEGRRLQQTLREQLCLKTPRGFRPRLVAGVDAGVVDGGRTIRAAVVVMSLPDLAVVTQSVARAPAIMPYVPGLLSFRELPGVVRALEQLDVTPELLLCDGQGIAHPRRLGIAAHLGLITDLPAIGVGKSRLVGTYREPRPEKGATSGLYDGHERIGTVLRSRDHVRPLYVSPGHRISHEDAVHWVLTCCTRYRLPEPQRAADRLASAKEAPA.

Mg(2+)-binding residues include Asp-46 and Asp-114.

The protein belongs to the endonuclease V family. Mg(2+) serves as cofactor.

The protein localises to the cytoplasm. It carries out the reaction Endonucleolytic cleavage at apurinic or apyrimidinic sites to products with a 5'-phosphate.. In terms of biological role, DNA repair enzyme involved in the repair of deaminated bases. Selectively cleaves double-stranded DNA at the second phosphodiester bond 3' to a deoxyinosine leaving behind the intact lesion on the nicked DNA. This Alkalilimnicola ehrlichii (strain ATCC BAA-1101 / DSM 17681 / MLHE-1) protein is Endonuclease V.